A 341-amino-acid chain; its full sequence is Tyrosine recombinase XerC (341 aa).

A Core-binding (CB) domain is found at 14 to 105 (PDAAEALERW…GVRSFFRWAD (92 aa)). The 184-residue stretch at 126–309 (PLPRPLAADD…DAEHLLSVYE (184 aa)) folds into the Tyr recombinase domain. Residues R169, K193, H261, R264, and H287 contribute to the active site. Y296 serves as the catalytic O-(3'-phospho-DNA)-tyrosine intermediate.

It belongs to the 'phage' integrase family. XerC subfamily. Forms a cyclic heterotetrameric complex composed of two molecules of XerC and two molecules of XerD.

It is found in the cytoplasm. Functionally, site-specific tyrosine recombinase, which acts by catalyzing the cutting and rejoining of the recombining DNA molecules. The XerC-XerD complex is essential to convert dimers of the bacterial chromosome into monomers to permit their segregation at cell division. It also contributes to the segregational stability of plasmids. The polypeptide is Tyrosine recombinase XerC (Rhodospirillum centenum (strain ATCC 51521 / SW)).